Reading from the N-terminus, the 228-residue chain is Phosphoribosylformylglycinamidine synthase subunit PurQ (228 aa).

Residues 3-226 (FAVVVFPGSN…VTYWRDAHVV (224 aa)) form the Glutamine amidotransferase type-1 domain. Cysteine 86 serves as the catalytic Nucleophile. Catalysis depends on residues histidine 195 and glutamate 197.

In terms of assembly, part of the FGAM synthase complex composed of 1 PurL, 1 PurQ and 2 PurS subunits.

The protein resides in the cytoplasm. The enzyme catalyses N(2)-formyl-N(1)-(5-phospho-beta-D-ribosyl)glycinamide + L-glutamine + ATP + H2O = 2-formamido-N(1)-(5-O-phospho-beta-D-ribosyl)acetamidine + L-glutamate + ADP + phosphate + H(+). It catalyses the reaction L-glutamine + H2O = L-glutamate + NH4(+). The protein operates within purine metabolism; IMP biosynthesis via de novo pathway; 5-amino-1-(5-phospho-D-ribosyl)imidazole from N(2)-formyl-N(1)-(5-phospho-D-ribosyl)glycinamide: step 1/2. Functionally, part of the phosphoribosylformylglycinamidine synthase complex involved in the purines biosynthetic pathway. Catalyzes the ATP-dependent conversion of formylglycinamide ribonucleotide (FGAR) and glutamine to yield formylglycinamidine ribonucleotide (FGAM) and glutamate. The FGAM synthase complex is composed of three subunits. PurQ produces an ammonia molecule by converting glutamine to glutamate. PurL transfers the ammonia molecule to FGAR to form FGAM in an ATP-dependent manner. PurS interacts with PurQ and PurL and is thought to assist in the transfer of the ammonia molecule from PurQ to PurL. This Anoxybacillus flavithermus (strain DSM 21510 / WK1) protein is Phosphoribosylformylglycinamidine synthase subunit PurQ.